Here is a 316-residue protein sequence, read N- to C-terminus: C1GALT1-specific chaperone 1 (316 aa).

At 1 to 6 (MLSESS) the chain is on the cytoplasmic side. A helical; Signal-anchor for type II membrane protein membrane pass occupies residues 7–26 (SFLKGVMLGSIFCALITMLG). Over 27–316 (HIRIGNRMHH…FLPPNGSEND (290 aa)) the chain is Lumenal.

Belongs to the glycosyltransferase 31 family. Beta3-Gal-T subfamily. Associates with core 1 beta-3-galactosyltransferase (C1GALT1), probably not with the soluble active form.

The protein resides in the membrane. Its function is as follows. Probable chaperone required for the generation of 1 O-glycan Gal-beta1-3GalNAc-alpha1-Ser/Thr (T antigen), which is a precursor for many extended O-glycans in glycoproteins. Probably acts as a specific molecular chaperone assisting the folding/stability of core 1 beta-3-galactosyltransferase (C1GALT1). This chain is C1GALT1-specific chaperone 1 (C1galt1c1), found in Mus musculus (Mouse).